A 225-amino-acid polypeptide reads, in one-letter code: Rho GDP-dissociation inhibitor 3 (225 aa).

The protein belongs to the Rho GDI family. As to expression, detected only in brain, lung, kidney and testis.

It is found in the cytoplasm. Inhibits GDP/GTP exchange reaction of RhoB. Interacts specifically with the GDP- and GTP-bound forms of post-translationally processed Rhob and Rhog proteins, both of which show a growth-regulated expression in mammalian cells. Stimulates the release of the GDP-bound but not the GTP-bound RhoB protein. Also inhibits the GDP/GTP exchange of RhoB but shows less ability to inhibit the dissociation of prebound GTP. The sequence is that of Rho GDP-dissociation inhibitor 3 (Arhgdig) from Mus musculus (Mouse).